The sequence spans 236 residues: Leucyl/phenylalanyl-tRNA--protein transferase (236 aa).

The protein belongs to the L/F-transferase family.

The protein localises to the cytoplasm. The catalysed reaction is N-terminal L-lysyl-[protein] + L-leucyl-tRNA(Leu) = N-terminal L-leucyl-L-lysyl-[protein] + tRNA(Leu) + H(+). It carries out the reaction N-terminal L-arginyl-[protein] + L-leucyl-tRNA(Leu) = N-terminal L-leucyl-L-arginyl-[protein] + tRNA(Leu) + H(+). It catalyses the reaction L-phenylalanyl-tRNA(Phe) + an N-terminal L-alpha-aminoacyl-[protein] = an N-terminal L-phenylalanyl-L-alpha-aminoacyl-[protein] + tRNA(Phe). Its function is as follows. Functions in the N-end rule pathway of protein degradation where it conjugates Leu, Phe and, less efficiently, Met from aminoacyl-tRNAs to the N-termini of proteins containing an N-terminal arginine or lysine. The protein is Leucyl/phenylalanyl-tRNA--protein transferase of Shewanella sp. (strain ANA-3).